The sequence spans 464 residues: Protein FAM90A8 (464 aa).

Disordered regions lie at residues 1–42 (MMAR…DPRL), 69–389 (VPAT…HDGA), and 415–437 (HSPE…SEAP). 2 stretches are compositionally biased toward basic and acidic residues: residues 74–89 (GKKE…KPRG) and 97–114 (NKDK…DPQR). Residues 180-197 (LASLSPLRKASLSSSSSL) show a composition bias toward low complexity.

This sequence belongs to the FAM90 family.

The chain is Protein FAM90A8 (FAM90A8) from Homo sapiens (Human).